A 617-amino-acid polypeptide reads, in one-letter code: 1-deoxy-D-xylulose-5-phosphate synthase (617 aa).

Thiamine diphosphate contacts are provided by residues histidine 76 and 117-119 (GHS). Residue aspartate 148 coordinates Mg(2+). Residues 149-150 (GA), asparagine 177, tyrosine 285, and glutamate 366 each bind thiamine diphosphate. Residue asparagine 177 coordinates Mg(2+).

This sequence belongs to the transketolase family. DXPS subfamily. Homodimer. Mg(2+) is required as a cofactor. Requires thiamine diphosphate as cofactor.

It carries out the reaction D-glyceraldehyde 3-phosphate + pyruvate + H(+) = 1-deoxy-D-xylulose 5-phosphate + CO2. The protein operates within metabolic intermediate biosynthesis; 1-deoxy-D-xylulose 5-phosphate biosynthesis; 1-deoxy-D-xylulose 5-phosphate from D-glyceraldehyde 3-phosphate and pyruvate: step 1/1. Its function is as follows. Catalyzes the acyloin condensation reaction between C atoms 2 and 3 of pyruvate and glyceraldehyde 3-phosphate to yield 1-deoxy-D-xylulose-5-phosphate (DXP). This is 1-deoxy-D-xylulose-5-phosphate synthase from Mannheimia succiniciproducens (strain KCTC 0769BP / MBEL55E).